The following is a 253-amino-acid chain: Ubiquinone/menaquinone biosynthesis C-methyltransferase UbiE (253 aa).

Residues Thr76, Asp97, and 125–126 (NA) each bind S-adenosyl-L-methionine.

The protein belongs to the class I-like SAM-binding methyltransferase superfamily. MenG/UbiE family.

It carries out the reaction a 2-demethylmenaquinol + S-adenosyl-L-methionine = a menaquinol + S-adenosyl-L-homocysteine + H(+). The enzyme catalyses a 2-methoxy-6-(all-trans-polyprenyl)benzene-1,4-diol + S-adenosyl-L-methionine = a 5-methoxy-2-methyl-3-(all-trans-polyprenyl)benzene-1,4-diol + S-adenosyl-L-homocysteine + H(+). Its pathway is quinol/quinone metabolism; menaquinone biosynthesis; menaquinol from 1,4-dihydroxy-2-naphthoate: step 2/2. It participates in cofactor biosynthesis; ubiquinone biosynthesis. Methyltransferase required for the conversion of demethylmenaquinol (DMKH2) to menaquinol (MKH2) and the conversion of 2-polyprenyl-6-methoxy-1,4-benzoquinol (DDMQH2) to 2-polyprenyl-3-methyl-6-methoxy-1,4-benzoquinol (DMQH2). This Bradyrhizobium diazoefficiens (strain JCM 10833 / BCRC 13528 / IAM 13628 / NBRC 14792 / USDA 110) protein is Ubiquinone/menaquinone biosynthesis C-methyltransferase UbiE.